A 368-amino-acid chain; its full sequence is N-acetylneuraminate epimerase (368 aa).

Positions 1–19 (MNKTITALAIIMASFAANA) are cleaved as a signal peptide. Kelch repeat units lie at residues 40-84 (TVYI…AFID), 86-137 (NLYV…FVHN), 139-173 (KAYV…KINA), 174-219 (YYFD…VNKG), 222-265 (TWLI…VAGG), 287-336 (ENYQ…PWNN), and 338-367 (LLII…VTVQ). Catalysis depends on Glu228, which acts as the Proton acceptor.

The protein belongs to the NanM family. As to quaternary structure, homodimer.

Its subcellular location is the periplasm. The enzyme catalyses N-acetyl-alpha-neuraminate = N-acetyl-beta-neuraminate. Converts alpha-N-acetylneuranimic acid (Neu5Ac) to the beta-anomer, accelerating the equilibrium between the alpha- and beta-anomers. Probably facilitates sialidase-negative bacteria to compete successfully for limited amounts of extracellular Neu5Ac, which is likely taken up in the beta-anomer. In addition, the rapid removal of sialic acid from solution might be advantageous to the bacterium to damp down host responses. The protein is N-acetylneuraminate epimerase of Escherichia coli O139:H28 (strain E24377A / ETEC).